The sequence spans 365 residues: Cobalt-precorrin-5B C(1)-methyltransferase (365 aa).

Belongs to the CbiD family.

It catalyses the reaction Co-precorrin-5B + S-adenosyl-L-methionine = Co-precorrin-6A + S-adenosyl-L-homocysteine. It participates in cofactor biosynthesis; adenosylcobalamin biosynthesis; cob(II)yrinate a,c-diamide from sirohydrochlorin (anaerobic route): step 6/10. Its function is as follows. Catalyzes the methylation of C-1 in cobalt-precorrin-5B to form cobalt-precorrin-6A. The polypeptide is Cobalt-precorrin-5B C(1)-methyltransferase (Geobacillus sp. (strain WCH70)).